A 172-amino-acid polypeptide reads, in one-letter code: Nicotinamide-nucleotide adenylyltransferase (172 aa).

Belongs to the archaeal NMN adenylyltransferase family.

The protein resides in the cytoplasm. It catalyses the reaction beta-nicotinamide D-ribonucleotide + ATP + H(+) = diphosphate + NAD(+). The protein operates within cofactor biosynthesis; NAD(+) biosynthesis; NAD(+) from nicotinamide D-ribonucleotide: step 1/1. The protein is Nicotinamide-nucleotide adenylyltransferase of Saccharolobus solfataricus (strain ATCC 35092 / DSM 1617 / JCM 11322 / P2) (Sulfolobus solfataricus).